The primary structure comprises 417 residues: Gamma-glutamyl phosphate reductase (417 aa).

It belongs to the gamma-glutamyl phosphate reductase family.

It is found in the cytoplasm. It catalyses the reaction L-glutamate 5-semialdehyde + phosphate + NADP(+) = L-glutamyl 5-phosphate + NADPH + H(+). Its pathway is amino-acid biosynthesis; L-proline biosynthesis; L-glutamate 5-semialdehyde from L-glutamate: step 2/2. In terms of biological role, catalyzes the NADPH-dependent reduction of L-glutamate 5-phosphate into L-glutamate 5-semialdehyde and phosphate. The product spontaneously undergoes cyclization to form 1-pyrroline-5-carboxylate. This Cronobacter sakazakii (strain ATCC BAA-894) (Enterobacter sakazakii) protein is Gamma-glutamyl phosphate reductase.